A 410-amino-acid chain; its full sequence is Polyprenol-phosphate-mannose-dependent alpha-(1-2)-phosphatidylinositol pentamannoside mannosyltransferase (410 aa).

The next 10 membrane-spanning stretches (helical) occupy residues 31-51 (LAPMLLVVSILARLAWTYLVP), 96-116 (FAAIVFYPLHLLPFGVVAFIW), 160-180 (TFDYGQVNVVLVLAVLCAVST), 188-208 (LLVGLAAGIKLTPAVAGLYFL), 214-234 (AAVACSAAVFFATVGVSWLVV), 276-296 (GFGPLVLIGIGITAVLALLAW), 306-326 (LGGILVVSLFGLVLSPISWTH), 328-348 (WVWLIPLMMWLLHGPLSALRG), 351-371 (ILGWGWLALTLLGVPWLLSFA), and 384-404 (LAWAGLVYIVATLATLGWIAF).

The protein belongs to the glycosyltransferase 87 family.

It localises to the cell membrane. Its pathway is phospholipid metabolism; phosphatidylinositol metabolism. Functionally, catalyzes the alpha-1,2 addition of a mannose residue from polyprenol-phosphate-mannose (PPM) to a monoacyl phosphatidylinositol tetramannoside (AcPIM4) to generate a monoacyl phosphatidylinositol pentamannoside (AcPIM5). The sequence is that of Polyprenol-phosphate-mannose-dependent alpha-(1-2)-phosphatidylinositol pentamannoside mannosyltransferase from Mycolicibacterium smegmatis (strain ATCC 700084 / mc(2)155) (Mycobacterium smegmatis).